The following is an 85-amino-acid chain: Toxin TdNa8 (85 aa).

The first 19 residues, 1-19 (MNYLTLIAAASLLTAGTES), serve as a signal peptide directing secretion. Positions 21-81 (KDGYPVKEGD…AAIKGYGRCR (61 aa)) constitute an LCN-type CS-alpha/beta domain. 4 disulfides stabilise this stretch: C31-C80, C35-C56, C42-C63, and C46-C65. At P82 the chain carries Proline amide.

The protein belongs to the long (4 C-C) scorpion toxin superfamily. Sodium channel inhibitor family. Alpha subfamily. As to expression, expressed by the venom gland.

The protein resides in the secreted. Alpha toxins bind voltage-independently at site-3 of sodium channels (Nav) and inhibit the inactivation of the activated channels, thereby blocking neuronal transmission. The chain is Toxin TdNa8 from Tityus discrepans (Venezuelan scorpion).